A 371-amino-acid polypeptide reads, in one-letter code: MRLVLLNYGIWHDRRSALKFTDIDYFVFSDASKYVSIGMSPYMRDTYRYTPMLAILLLPTQYGFPSWGKYLFSISDLIAGWLMIKLLSRRISYKRSLIYSSFWILNPFVAIISTRGNCEAILGILSIALLYLIEKKSVWLASLILGFSVHFKIYPFMYGIAFLVYFSKPKKGSTFMEKFLSLLSINQLKIVVGSLFMFTICNLLMYYLYGSPFLEHTYLYHFGRTDHRHNFSLHHLNLYYESSFGAKASSLFAFLPQLSLCMLIPLVFGKKNLPGTLFAQTFAFVTFNKVCTSQYFMWYLVFLPLVLPNSKLLSKKGLICLSLWIIGQLLWLISAYNLEMLGKSVFIPLWLSGLLFFFFNVYELKIILDSL.

8 helical membrane-spanning segments follow: residues 64–84 (FPSW…WLMI), 120–140 (AILG…SVWL), 144–164 (ILGF…AFLV), 190–210 (IVVG…YLYG), 248–268 (ASSL…PLVF), 290–310 (VCTS…LPNS), 318–338 (LICL…AYNL), and 344–364 (SVFI…VYEL).

Belongs to the PIGM family.

It is found in the endoplasmic reticulum membrane. It functions in the pathway glycolipid biosynthesis; glycosylphosphatidylinositol-anchor biosynthesis. Its function is as follows. Mannosyltransferase involved in glycosylphosphatidylinositol-anchor biosynthesis. Transfers the first alpha-1,4-mannose to GlcN-acyl-PI during GPI precursor assembly. Required for cell wall integrity. The protein is GPI mannosyltransferase 1 (gpi14) of Schizosaccharomyces pombe (strain 972 / ATCC 24843) (Fission yeast).